Consider the following 114-residue polypeptide: Probable non-functional T cell receptor beta variable 6-7 (114 aa).

The first 21 residues, 1–21 (MSLGLLCCVAFSLLWAGPMNA), serve as a signal peptide directing secretion. In terms of domain architecture, Ig-like spans 22-114 (GVTQTPKFHV…TSVYFCASSY (93 aa)). Cysteines 42 and 110 form a disulfide. Asparagine 84 carries an N-linked (GlcNAc...) asparagine glycan.

As to quaternary structure, alpha-beta TR is a heterodimer composed of an alpha and beta chain; disulfide-linked. The alpha-beta TR is associated with the transmembrane signaling CD3 coreceptor proteins to form the TR-CD3 (TcR or TCR). The assembly of alpha-beta TR heterodimers with CD3 occurs in the endoplasmic reticulum where a single alpha-beta TR heterodimer associates with one CD3D-CD3E heterodimer, one CD3G-CD3E heterodimer and one CD247 homodimer forming a stable octameric structure. CD3D-CD3E and CD3G-CD3E heterodimers preferentially associate with TR alpha and TR beta chains, respectively. The association of the CD247 homodimer is the last step of TcR assembly in the endoplasmic reticulum and is required for transport to the cell surface.

The protein localises to the cell membrane. Functionally, probable non-functional open reading frame (ORF) of V region of the variable domain of T cell receptor (TR) beta chain. Non-functional ORF generally cannot participate in the synthesis of a productive T cell receptor (TR) chain due to altered V-(D)-J or switch recombination and/or splicing site (at mRNA level) and/or conserved amino acid change (protein level). Alpha-beta T cell receptors are antigen specific receptors which are essential to the immune response and are present on the cell surface of T lymphocytes. Recognize peptide-major histocompatibility (MH) (pMH) complexes that are displayed by antigen presenting cells (APC), a prerequisite for efficient T cell adaptive immunity against pathogens. Binding of alpha-beta TR to pMH complex initiates TR-CD3 clustering on the cell surface and intracellular activation of LCK that phosphorylates the ITAM motifs of CD3G, CD3D, CD3E and CD247 enabling the recruitment of ZAP70. In turn ZAP70 phosphorylates LAT, which recruits numerous signaling molecules to form the LAT signalosome. The LAT signalosome propagates signal branching to three major signaling pathways, the calcium, the mitogen-activated protein kinase (MAPK) kinase and the nuclear factor NF-kappa-B (NF-kB) pathways, leading to the mobilization of transcription factors that are critical for gene expression and essential for T cell growth and differentiation. The T cell repertoire is generated in the thymus, by V-(D)-J rearrangement. This repertoire is then shaped by intrathymic selection events to generate a peripheral T cell pool of self-MH restricted, non-autoaggressive T cells. Post-thymic interaction of alpha-beta TR with the pMH complexes shapes TR structural and functional avidity. This chain is Probable non-functional T cell receptor beta variable 6-7, found in Homo sapiens (Human).